A 260-amino-acid chain; its full sequence is Carbonic anhydrase 3 (260 aa).

A2 is subject to N-acetylalanine. Positions 3-259 (KEWGYADHNG…IKGRIVKASF (257 aa)) constitute an Alpha-carbonic anhydrase domain. Phosphoserine is present on residues S29, S43, S50, and S55. Positions 64 to 67 (KTCR) are involved in proton transfer. T73 bears the Phosphothreonine mark. Zn(2+) is bound by residues H94, H96, and H119. Y127 is subject to Phosphotyrosine. C182 and C187 each carry S-glutathionyl cysteine. 198 to 199 (TT) contributes to the substrate binding site. T216 carries the phosphothreonine modification. S219 is modified (phosphoserine).

The protein belongs to the alpha-carbonic anhydrase family. The cofactor is Zn(2+). Post-translationally, S-thiolated both by thiol-disulfide exchange with glutathione disulfide and by oxyradical-initiated S-thiolation with reduced glutathione. In terms of processing, S-glutathionylated in hepatocytes under oxidative stress.

The protein resides in the cytoplasm. It catalyses the reaction hydrogencarbonate + H(+) = CO2 + H2O. Inhibited by acetazolamide. Its function is as follows. Reversible hydration of carbon dioxide. This is Carbonic anhydrase 3 (CA3) from Bos taurus (Bovine).